Consider the following 511-residue polypeptide: ATP synthase subunit alpha, mitochondrial (511 aa).

ATP is bound at residue 171–178 (GDRQTGKT).

This sequence belongs to the ATPase alpha/beta chains family. As to quaternary structure, F-type ATPases have 2 components, CF(1) - the catalytic core - and CF(0) - the membrane proton channel. CF(1) has five subunits: alpha(3), beta(3), gamma(1), delta(1), epsilon(1). CF(0) has three main subunits: a, b and c.

It localises to the mitochondrion. Its subcellular location is the mitochondrion inner membrane. In terms of biological role, mitochondrial membrane ATP synthase (F(1)F(0) ATP synthase or Complex V) produces ATP from ADP in the presence of a proton gradient across the membrane which is generated by electron transport complexes of the respiratory chain. F-type ATPases consist of two structural domains, F(1) - containing the extramembraneous catalytic core, and F(0) - containing the membrane proton channel, linked together by a central stalk and a peripheral stalk. During catalysis, ATP synthesis in the catalytic domain of F(1) is coupled via a rotary mechanism of the central stalk subunits to proton translocation. Subunits alpha and beta form the catalytic core in F(1). Rotation of the central stalk against the surrounding alpha(3)beta(3) subunits leads to hydrolysis of ATP in three separate catalytic sites on the beta subunits. Subunit alpha does not bear the catalytic high-affinity ATP-binding sites. This is ATP synthase subunit alpha, mitochondrial (ATPA) from Oenothera biennis (German evening primrose).